The following is a 62-amino-acid chain: Double zinc ribbon protein TK0111 (62 aa).

Residues Cys-13, Cys-16, Cys-31, Cys-34, Cys-42, Cys-45, Cys-54, and Cys-57 each coordinate Zn(2+).

In terms of assembly, crystallized in association with 70S ribosomes. Zn(2+) serves as cofactor.

In Thermococcus kodakarensis (strain ATCC BAA-918 / JCM 12380 / KOD1) (Pyrococcus kodakaraensis (strain KOD1)), this protein is Double zinc ribbon protein TK0111.